Consider the following 316-residue polypeptide: Peroxidase 31 (316 aa).

Residues 1-19 (MASLKSLFLLFLFFFTAQS) form the signal peptide. 4 disulfide bridges follow: Cys30/Cys111, Cys63/Cys68, Cys117/Cys312, and Cys196/Cys222. His61 serves as the catalytic Proton acceptor. Residues Asp62, Gly67, Asp69, and Ser71 each coordinate Ca(2+). Pro159 is a substrate binding site. Position 189 (His189) interacts with heme b. Ser190 contributes to the Ca(2+) binding site. A glycan (N-linked (GlcNAc...) asparagine) is linked at Asn206. Residues Asp236, Thr239, and Asp244 each coordinate Ca(2+).

Belongs to the peroxidase family. Classical plant (class III) peroxidase subfamily. The cofactor is heme b. It depends on Ca(2+) as a cofactor.

The protein resides in the secreted. It catalyses the reaction 2 a phenolic donor + H2O2 = 2 a phenolic radical donor + 2 H2O. In terms of biological role, removal of H(2)O(2), oxidation of toxic reductants, biosynthesis and degradation of lignin, suberization, auxin catabolism, response to environmental stresses such as wounding, pathogen attack and oxidative stress. These functions might be dependent on each isozyme/isoform in each plant tissue. The sequence is that of Peroxidase 31 (PER31) from Arabidopsis thaliana (Mouse-ear cress).